The chain runs to 495 residues: MSDRPTPARTRFAPSPTGYLHIGSLRTVLFSWLWARHTGGQFLLRIEDTDRKRFVEGAEEQLTSSLQAIGLMWDEGPIVGGPHAPYKQSERLEIYQAHAQALIDKGVAYRSYATADEIAAINAEREARGEPKLLVFRNLPGIDDAAREAAGADYNVRLSLKTTGQTVVQDLVRGQIVFDNAALKMPDPVLLKTDGFPTYALAAMVDDHLMGITHVLRADEWIPTWPIHHQIYEAFGWEQPVWVHVPQVLGSDGKKLSKRHGDTSVTEYIDLGFVPEAIINYLALIGWSYDDKTEFMTLEELIERFDLNRIRPSGGVFDRDKLLHFNGVYLRNMAPAELAQRVAPYLSKAGLISAEPTAAELAKITEYLPLVQDRLKLLSEAPELLDFFFVDPQGYDPALLVPKKGDPAQTVEILGQVKASFEAVETWDAPSLDKLLHDFVNQLGLKIPQVFMPIRVAISGRTTSPGLFETLAVLGKAVTLARISTAAAALSSASV.

Positions 14-24 match the 'HIGH' region motif; that stretch reads PSPTGYLHIGS. The 'KMSKS' region signature appears at 255-259; it reads KLSKR. Lys-258 contacts ATP.

It belongs to the class-I aminoacyl-tRNA synthetase family. Glutamate--tRNA ligase type 1 subfamily. Monomer.

It localises to the cytoplasm. The catalysed reaction is tRNA(Glu) + L-glutamate + ATP = L-glutamyl-tRNA(Glu) + AMP + diphosphate. Functionally, catalyzes the attachment of glutamate to tRNA(Glu) in a two-step reaction: glutamate is first activated by ATP to form Glu-AMP and then transferred to the acceptor end of tRNA(Glu). The sequence is that of Glutamate--tRNA ligase from Herpetosiphon aurantiacus (strain ATCC 23779 / DSM 785 / 114-95).